Consider the following 218-residue polypeptide: Pyrrolidone-carboxylate peptidase 2 (218 aa).

Catalysis depends on residues Glu83, Cys146, and His170.

It belongs to the peptidase C15 family. As to quaternary structure, homotetramer.

The protein localises to the cytoplasm. It carries out the reaction Release of an N-terminal pyroglutamyl group from a polypeptide, the second amino acid generally not being Pro.. In terms of biological role, removes 5-oxoproline from various penultimate amino acid residues except L-proline. This chain is Pyrrolidone-carboxylate peptidase 2, found in Photorhabdus laumondii subsp. laumondii (strain DSM 15139 / CIP 105565 / TT01) (Photorhabdus luminescens subsp. laumondii).